Consider the following 67-residue polypeptide: Small ribosomal subunit protein eS31 (67 aa).

Positions 35, 38, 54, and 57 each coordinate Zn(2+). The C4-type zinc-finger motif lies at 35 to 57 (CPRCGSIMAHHMKPLERWACGKC).

This sequence belongs to the eukaryotic ribosomal protein eS31 family. Part of the 30S ribosomal subunit. Zn(2+) is required as a cofactor.

The protein is Small ribosomal subunit protein eS31 of Sulfolobus acidocaldarius (strain ATCC 33909 / DSM 639 / JCM 8929 / NBRC 15157 / NCIMB 11770).